The sequence spans 289 residues: Homoserine kinase (289 aa).

Proline 79 to serine 89 provides a ligand contact to ATP.

The protein belongs to the GHMP kinase family. Homoserine kinase subfamily.

The protein localises to the cytoplasm. The enzyme catalyses L-homoserine + ATP = O-phospho-L-homoserine + ADP + H(+). It functions in the pathway amino-acid biosynthesis; L-threonine biosynthesis; L-threonine from L-aspartate: step 4/5. Catalyzes the ATP-dependent phosphorylation of L-homoserine to L-homoserine phosphate. The chain is Homoserine kinase from Streptococcus pneumoniae (strain Taiwan19F-14).